The chain runs to 202 residues: Alpha-S1-casein (202 aa).

Disordered regions lie at residues 1 to 25 and 51 to 84; these read RPKLPHRHPEIIQNEQDSREKVLKE and LKEKQKDEHKEYLIEDPEQQESSSTSSSEEVVPI. Basic and acidic residues-rich tracts occupy residues 16-25 and 51-63; these read QDSREKVLKE and LKEKQKDEHKEYL. Serine 18 is subject to Phosphoserine. Over residues 70–80 the composition is skewed to low complexity; it reads QESSSTSSSEE. Serine 72, serine 73, serine 74, serine 76, serine 77, and serine 78 each carry phosphoserine.

Belongs to the alpha-casein family. In terms of tissue distribution, mammary gland specific. Secreted in milk.

The protein resides in the secreted. Functionally, important role in the capacity of milk to transport calcium phosphate. The sequence is that of Alpha-S1-casein from Equus asinus (Donkey).